Consider the following 323-residue polypeptide: tRNA U34 carboxymethyltransferase (323 aa).

Carboxy-S-adenosyl-L-methionine contacts are provided by residues Lys-91, Trp-105, Lys-110, Gly-130, 152–154 (DPT), 181–182 (IE), Met-196, Tyr-200, and Arg-315.

It belongs to the class I-like SAM-binding methyltransferase superfamily. CmoB family. Homotetramer.

It catalyses the reaction carboxy-S-adenosyl-L-methionine + 5-hydroxyuridine(34) in tRNA = 5-carboxymethoxyuridine(34) in tRNA + S-adenosyl-L-homocysteine + H(+). Its function is as follows. Catalyzes carboxymethyl transfer from carboxy-S-adenosyl-L-methionine (Cx-SAM) to 5-hydroxyuridine (ho5U) to form 5-carboxymethoxyuridine (cmo5U) at position 34 in tRNAs. The protein is tRNA U34 carboxymethyltransferase of Escherichia coli O7:K1 (strain IAI39 / ExPEC).